The chain runs to 525 residues: GMP synthase [glutamine-hydrolyzing] (525 aa).

A Glutamine amidotransferase type-1 domain is found at 9–207; it reads RILILDFGSQ…VLQICQCEPL (199 aa). Residue Cys-86 is the Nucleophile of the active site. Residues His-181 and Glu-183 contribute to the active site. Residues 208–400 form the GMPS ATP-PPase domain; it reads WTPRNIIDQT…LGLPNAMLHR (193 aa). 235 to 241 serves as a coordination point for ATP; it reads SGGVDSA.

Homodimer.

The enzyme catalyses XMP + L-glutamine + ATP + H2O = GMP + L-glutamate + AMP + diphosphate + 2 H(+). It participates in purine metabolism; GMP biosynthesis; GMP from XMP (L-Gln route): step 1/1. Catalyzes the synthesis of GMP from XMP. This chain is GMP synthase [glutamine-hydrolyzing], found in Hamiltonella defensa subsp. Acyrthosiphon pisum (strain 5AT).